The primary structure comprises 114 residues: uncharacterized protein (114 aa).

This is an uncharacterized protein from Methanocaldococcus jannaschii (strain ATCC 43067 / DSM 2661 / JAL-1 / JCM 10045 / NBRC 100440) (Methanococcus jannaschii).